The following is a 135-amino-acid chain: Mu-like prophage FluMu protein gp46 (135 aa).

It to phage Mu protein gp46.

The sequence is that of Mu-like prophage FluMu protein gp46 from Haemophilus influenzae (strain ATCC 51907 / DSM 11121 / KW20 / Rd).